The chain runs to 407 residues: MKRTFIMVLDSFGIGASADAKKFGDEGADTLGHIAEACARGEANVGRSGPLTLPNLSRLGLGKAAEESTGTFPVGLDKNADIIGAYGYASELSSGKDTPSGHWEIAGVPVLFDWGYFSDVENSFPQELLDKLVKRANLPGYLGNCHSSGTVILDQLGEEHMKTGKPIFYTSADSVFQIACHEETFGLDRLYELCEIAREELTDGGYNIGRVIARPFIGDKPGHFQRTGNRHDLAVEPPAPTMLKKLVDEKGGEVVSIGKIADIYAQVGITQKVKATGLDALFDATIEEMKKAGDNTIVFTNFVDFDSSYGHRRDVAGYAAALELFDRRLPELMALIKEDDILILTADHGCDPTWPGTDHTREHIPVLVYGPKVKPGSLGHRETFADIGQTVAAYFGLSPMDYGKNML.

Mn(2+) contacts are provided by Asp-10, Asp-306, His-311, Asp-347, His-348, and His-359.

It belongs to the phosphopentomutase family. Requires Mn(2+) as cofactor.

Its subcellular location is the cytoplasm. It carries out the reaction 2-deoxy-alpha-D-ribose 1-phosphate = 2-deoxy-D-ribose 5-phosphate. The enzyme catalyses alpha-D-ribose 1-phosphate = D-ribose 5-phosphate. Its pathway is carbohydrate degradation; 2-deoxy-D-ribose 1-phosphate degradation; D-glyceraldehyde 3-phosphate and acetaldehyde from 2-deoxy-alpha-D-ribose 1-phosphate: step 1/2. Isomerase that catalyzes the conversion of deoxy-ribose 1-phosphate (dRib-1-P) and ribose 1-phosphate (Rib-1-P) to deoxy-ribose 5-phosphate (dRib-5-P) and ribose 5-phosphate (Rib-5-P), respectively. The polypeptide is Phosphopentomutase (Yersinia pestis bv. Antiqua (strain Antiqua)).